Consider the following 296-residue polypeptide: MQDRFIRSITQLPLPLADALIPLLHQNFAGHIDAMQLAKLTLASKMTEAEVLLALLPIAAALAKPPISEFYVGAIAKGKSGDIYMGANLELPGEALFHSVHAEQSAISHAWLSGESQIVDIIVNASPCGHCRQFMNELVDGANITIHLPAQESHSLAYYLPYAFGPKDLNVVSPLLAKQQTEFVLDSSDPMIIEGLDHAGLSYAPYTQSFAAVVLETHDGATYCGRYAENAAFNPSMLPMQMALSNLTRHNREFSDIRRAVLIESSQGKISLVGATMDALHTIAAVELEHIVVDPV.

CMP/dCMP-type deaminase domains follow at residues 47-167 (TEAE…FGPK) and 186-296 (DSSD…VDPV). 88–90 (NLE) serves as a coordination point for substrate. Position 101 (H101) interacts with Zn(2+). Residue E103 is the Proton donor of the active site. C128 and C131 together coordinate Zn(2+).

The protein belongs to the cytidine and deoxycytidylate deaminase family. Homodimer. Zn(2+) serves as cofactor.

The catalysed reaction is cytidine + H2O + H(+) = uridine + NH4(+). It carries out the reaction 2'-deoxycytidine + H2O + H(+) = 2'-deoxyuridine + NH4(+). This enzyme scavenges exogenous and endogenous cytidine and 2'-deoxycytidine for UMP synthesis. This Shewanella sp. (strain W3-18-1) protein is Cytidine deaminase.